The chain runs to 661 residues: Zeaxanthin epoxidase, chloroplastic (661 aa).

The transit peptide at 1 to 50 (MASTLFYNSMNLSAAVFSRTHFPIPINKDFPLEFSPCIHTDYHLRSRTRS) directs the protein to the chloroplast. FAD contacts are provided by residues 82 to 110 (RILV…VVFE) and 360 to 373 (ILTW…LLGD). Residues 558-607 (CIIGSAPHGDVSGISIAIPKPQVSEMHARISYKDGAFYLTDLRSEHGTWI) form the FHA domain.

Requires FAD as cofactor.

It localises to the plastid. Its subcellular location is the chloroplast. The catalysed reaction is all-trans-zeaxanthin + 4 reduced [2Fe-2S]-[ferredoxin] + 2 O2 + 4 H(+) = all-trans-violaxanthin + 4 oxidized [2Fe-2S]-[ferredoxin] + 2 H2O. It participates in plant hormone biosynthesis; abscisate biosynthesis. Converts zeaxanthin into antheraxanthin and subsequently violaxanthin. Involved in the epoxidation of zeaxanthin. This Prunus armeniaca (Apricot) protein is Zeaxanthin epoxidase, chloroplastic.